Reading from the N-terminus, the 427-residue chain is Peptidase B (427 aa).

Mn(2+)-binding residues include Lys195 and Asp200. Residue Lys207 is part of the active site. Mn(2+) contacts are provided by Asp218, Asp277, and Glu279. The active site involves Arg281.

It belongs to the peptidase M17 family. As to quaternary structure, homohexamer. Mn(2+) serves as cofactor.

The protein resides in the cytoplasm. The enzyme catalyses Release of an N-terminal amino acid, Xaa, from a peptide or arylamide. Xaa is preferably Glu or Asp but may be other amino acids, including Leu, Met, His, Cys and Gln.. Probably plays an important role in intracellular peptide degradation. In Escherichia coli (strain SMS-3-5 / SECEC), this protein is Peptidase B.